Reading from the N-terminus, the 125-residue chain is uncharacterized protein (125 aa).

The HTH hxlR-type domain occupies 14–112; that stretch reads CPVEFTLDVI…WGESNRDVLE (99 aa).

This is an uncharacterized protein from Bacillus subtilis (strain 168).